A 134-amino-acid chain; its full sequence is uncharacterized protein (134 aa).

Helical transmembrane passes span 9-29 (PYFL…HGTA), 49-69 (MLLV…LGLF), and 107-127 (ALLY…ACAL).

This sequence belongs to the DoxX family.

Its subcellular location is the cell membrane. This is an uncharacterized protein from Haemophilus influenzae (strain ATCC 51907 / DSM 11121 / KW20 / Rd).